The chain runs to 220 residues: MSDGAFDAGRTGGLLRLSQWLSPAFPVSAYAYSHGLEAEICHGRVRDGADVAAWIEGVVRRGAGRTDAIVMLSAMQAGADLDRLHDLARALAGSRERWEETRDQGAALAATLAAMGEGDGVARAYPVALGAAAARLDLAADVVAALYLQSVVGNLVSAAVRFVPLGQAEGQRIVAGMQGAVADVAAEVVNCSIDDIAQAAFGADLAAMEHEGLEVRIFRT.

This sequence belongs to the UreF family. In terms of assembly, ureD, UreF and UreG form a complex that acts as a GTP-hydrolysis-dependent molecular chaperone, activating the urease apoprotein by helping to assemble the nickel containing metallocenter of UreC. The UreE protein probably delivers the nickel.

It is found in the cytoplasm. Required for maturation of urease via the functional incorporation of the urease nickel metallocenter. The chain is Urease accessory protein UreF from Jannaschia sp. (strain CCS1).